A 357-amino-acid chain; its full sequence is Cell division control protein 10 (357 aa).

The Septin-type G domain occupies 34–306; that stretch reads RGFQFNIMVV…ETFRSKQLIA (273 aa). Residues 44–51 are G1 motif; it reads GRSGLGKS. Residues 44–51, threonine 78, glycine 104, 184–192, glycine 240, and arginine 255 contribute to the GTP site; these read GRSGLGKS and KSDSLTLDE. A G3 motif region spans residues 101 to 104; the sequence is DTPG. Residues 183-186 are G4 motif; that stretch reads AKSD. A disordered region spans residues 310–357; that stretch reads NASNPNRQSQLQKDQGQTSQQSNQDLKNTSGVPNAPMFQSTTGTAAAR.

It belongs to the TRAFAC class TrmE-Era-EngA-EngB-Septin-like GTPase superfamily. Septin GTPase family.

Its subcellular location is the bud neck. Functionally, plays a role in the cell cycle. Involved in the formation of the ring of filaments in the neck region at the mother-bud junction during mitosis. This is Cell division control protein 10 (CDC10) from Candida albicans (strain SC5314 / ATCC MYA-2876) (Yeast).